The following is a 174-amino-acid chain: MKTVKDYIRTIPDFPEKGIMFRDVTSVIQDADGLKLAIDEMIKRLDGLDFDVIAGAESRGFVFGMPIAYALHKPFVMVRKAGKLPCETVSKTYDLEYGTATIEMHKDSVKPGQKVVLVDDLIATGGTMQAAAELVEELGGEVVKMLFLIELAGLNGRKLLSKYDVDAVVSYDGK.

This sequence belongs to the purine/pyrimidine phosphoribosyltransferase family. Homodimer.

The protein resides in the cytoplasm. It catalyses the reaction AMP + diphosphate = 5-phospho-alpha-D-ribose 1-diphosphate + adenine. The protein operates within purine metabolism; AMP biosynthesis via salvage pathway; AMP from adenine: step 1/1. Functionally, catalyzes a salvage reaction resulting in the formation of AMP, that is energically less costly than de novo synthesis. The polypeptide is Adenine phosphoribosyltransferase (Agathobacter rectalis (strain ATCC 33656 / DSM 3377 / JCM 17463 / KCTC 5835 / VPI 0990) (Eubacterium rectale)).